The following is a 1462-amino-acid chain: Gag-Pol polyprotein (1462 aa).

Residue glycine 2 is the site of N-myristoyl glycine; by host attachment. Residues 7-31 (VLRGKKADELEKIRLRPGGKKKYRL) form an interaction with Gp41 region. Positions 16 to 22 (LEKIRLR) match the Nuclear export signal motif. Positions 26–32 (KKKYRLK) match the Nuclear localization signal motif. The interval 191 to 228 (NCVGDHQAAMQIIREIINEEAADWDVQHPIPGPLPAGQ) is interaction with human PPIA/CYPA and NUP153. Residues 279 to 364 (YNPTNILDIK…GGPGQKARLM (86 aa)) are dimerization/Multimerization of capsid protein p24. 2 consecutive CCHC-type zinc fingers follow at residues 388 to 405 (IKCW…QCRA) and 409 to 426 (QGCW…NCPD). Positions 441–507 (APQLPRGPKF…RRDTTQRDDR (67 aa)) are disordered. The span at 454-468 (NTNSTPNGSSSGPTG) shows a compositional bias: low complexity. Basic and acidic residues-rich tracts occupy residues 471 to 490 (HAAR…RSDR) and 497 to 507 (ARRDTTQRDDR). The segment at 512 to 516 (PQFSL) is dimerization of protease. Residues 531-600 (VEVLLDTGAD…TPINIFGRNI (70 aa)) enclose the Peptidase A2 domain. Aspartate 536 serves as the catalytic For protease activity; shared with dimeric partner. Dimerization of protease stretches follow at residues 560 to 566 (GIGGFIN) and 599 to 611 (NILT…LNLP). Residues 654–844 (EGQLEEAPPT…PPYQWMGYEL (191 aa)) enclose the Reverse transcriptase domain. Residues aspartate 720, aspartate 795, and aspartate 796 each coordinate Mg(2+). Positions 837–845 (YQWMGYELW) are RT 'primer grip'. The short motif at 1007–1023 (WEQWWDNYWQVTWIPDW) is the Tryptophan repeat motif element. Positions 1043–1166 (IPGAETFYTD…IDHLVSQGIR (124 aa)) constitute an RNase H type-1 domain. Residues aspartate 1052, glutamate 1087, aspartate 1107, and aspartate 1158 each contribute to the Mg(2+) site. Residues 1172 to 1213 (ERIEPAQEEHGKYHSNVKELAHKFGLPNLVARQIVNTCAQCQ) form an Integrase-type zinc finger. Residues histidine 1181, histidine 1185, cysteine 1209, and cysteine 1212 each coordinate Zn(2+). The Integrase catalytic domain maps to 1222–1373 (QVNAELGTWQ…TPVERLVNMI (152 aa)). Mg(2+) is bound by residues aspartate 1233, aspartate 1285, and glutamate 1321. Positions 1392-1439 (FRVYFREGRNQLWQGPGELLWKGDGAVIVKVGTDIKVIPRRKAKIIRD) form a DNA-binding region, integrase-type. The disordered stretch occupies residues 1443–1462 (RQEMDSGSHLEGAREDGEMA).

In terms of assembly, homotrimer; further assembles as hexamers of trimers. Interacts with gp41 (via C-terminus). Interacts with host CALM1; this interaction induces a conformational change in the Matrix protein, triggering exposure of the myristate group. Interacts with host AP3D1; this interaction allows the polyprotein trafficking to multivesicular bodies during virus assembly. Part of the pre-integration complex (PIC) which is composed of viral genome, matrix protein, Vpr and integrase. Homodimer; the homodimer further multimerizes as homohexamers or homopentamers. Interacts with human PPIA/CYPA. Interacts with human NUP153. Interacts with host PDZD8; this interaction stabilizes the capsid. Interacts with monkey TRIM5; this interaction destabilizes the capsid. As to quaternary structure, homodimer, whose active site consists of two apposed aspartic acid residues. In terms of assembly, heterodimer of p66 RT and p51 RT (RT p66/p51). Heterodimerization of RT is essential for DNA polymerase activity. The overall folding of the subdomains is similar in p66 RT and p51 RT but the spatial arrangements of the subdomains are dramatically different. Homotetramer; may further associate as a homohexadecamer. Part of the pre-integration complex (PIC) which is composed of viral genome, matrix protein, Vpr and integrase. Interacts with human SMARCB1/INI1 and human PSIP1/LEDGF isoform 1. Interacts with human KPNA3; this interaction might play a role in nuclear import of the pre-integration complex. Interacts with human NUP153; this interaction might play a role in nuclear import of the pre-integration complex. Requires Mg(2+) as cofactor. Post-translationally, specific enzymatic cleavages by the viral protease yield mature proteins. The protease is released by autocatalytic cleavage. The polyprotein is cleaved during and after budding, this process is termed maturation. Proteolytic cleavage of p66 RT removes the RNase H domain to yield the p51 RT subunit. Nucleocapsid protein p7 might be further cleaved after virus entry.

The protein resides in the host cell membrane. Its subcellular location is the host endosome. The protein localises to the host multivesicular body. It localises to the virion membrane. It is found in the host nucleus. The protein resides in the host cytoplasm. Its subcellular location is the virion. The catalysed reaction is Endopeptidase for which the P1 residue is preferably hydrophobic.. It carries out the reaction Endohydrolysis of RNA in RNA/DNA hybrids. Three different cleavage modes: 1. sequence-specific internal cleavage of RNA. Human immunodeficiency virus type 1 and Moloney murine leukemia virus enzymes prefer to cleave the RNA strand one nucleotide away from the RNA-DNA junction. 2. RNA 5'-end directed cleavage 13-19 nucleotides from the RNA end. 3. DNA 3'-end directed cleavage 15-20 nucleotides away from the primer terminus.. It catalyses the reaction 3'-end directed exonucleolytic cleavage of viral RNA-DNA hybrid.. The enzyme catalyses DNA(n) + a 2'-deoxyribonucleoside 5'-triphosphate = DNA(n+1) + diphosphate. With respect to regulation, protease: The viral protease is inhibited by many synthetic protease inhibitors (PIs), such as amprenavir, atazanavir, indinavir, loprinavir, nelfinavir, ritonavir and saquinavir. Use of protease inhibitors in tritherapy regimens permit more ambitious therapeutic strategies. Reverse transcriptase/ribonuclease H: RT can be inhibited either by nucleoside RT inhibitors (NRTIs) or by non nucleoside RT inhibitors (NNRTIs). NRTIs act as chain terminators, whereas NNRTIs inhibit DNA polymerization by binding a small hydrophobic pocket near the RT active site and inducing an allosteric change in this region. Classical NRTIs are abacavir, adefovir (PMEA), didanosine (ddI), lamivudine (3TC), stavudine (d4T), tenofovir (PMPA), zalcitabine (ddC), and zidovudine (AZT). Classical NNRTIs are atevirdine (BHAP U-87201E), delavirdine, efavirenz (DMP-266), emivirine (I-EBU), and nevirapine (BI-RG-587). The tritherapies used as a basic effective treatment of AIDS associate two NRTIs and one NNRTI. Its function is as follows. Mediates, with Gag polyprotein, the essential events in virion assembly, including binding the plasma membrane, making the protein-protein interactions necessary to create spherical particles, recruiting the viral Env proteins, and packaging the genomic RNA via direct interactions with the RNA packaging sequence (Psi). Gag-Pol polyprotein may regulate its own translation, by the binding genomic RNA in the 5'-UTR. At low concentration, the polyprotein would promote translation, whereas at high concentration, the polyprotein would encapsidate genomic RNA and then shut off translation. Targets the polyprotein to the plasma membrane via a multipartite membrane-binding signal, that includes its myristoylated N-terminus. Matrix protein is part of the pre-integration complex. Implicated in the release from host cell mediated by Vpu. Binds to RNA. In terms of biological role, forms the conical core that encapsulates the genomic RNA-nucleocapsid complex in the virion. Most core are conical, with only 7% tubular. The core is constituted by capsid protein hexamer subunits. The core is disassembled soon after virion entry. Host restriction factors such as TRIM5-alpha or TRIMCyp bind retroviral capsids and cause premature capsid disassembly, leading to blocks in reverse transcription. Capsid restriction by TRIM5 is one of the factors which restricts HIV-1 to the human species. Host PIN1 apparently facilitates the virion uncoating. On the other hand, interactions with PDZD8 or CYPA stabilize the capsid. Functionally, encapsulates and protects viral dimeric unspliced genomic RNA (gRNA). Binds these RNAs through its zinc fingers. Acts as a nucleic acid chaperone which is involved in rearangement of nucleic acid secondary structure during gRNA retrotranscription. Also facilitates template switch leading to recombination. As part of the polyprotein, participates in gRNA dimerization, packaging, tRNA incorporation and virion assembly. Its function is as follows. Aspartyl protease that mediates proteolytic cleavages of Gag and Gag-Pol polyproteins during or shortly after the release of the virion from the plasma membrane. Cleavages take place as an ordered, step-wise cascade to yield mature proteins. This process is called maturation. Displays maximal activity during the budding process just prior to particle release from the cell. Also cleaves Nef and Vif, probably concomitantly with viral structural proteins on maturation of virus particles. Hydrolyzes host EIF4GI and PABP1 in order to shut off the capped cellular mRNA translation. The resulting inhibition of cellular protein synthesis serves to ensure maximal viral gene expression and to evade host immune response. Multifunctional enzyme that converts the viral RNA genome into dsDNA in the cytoplasm, shortly after virus entry into the cell. This enzyme displays a DNA polymerase activity that can copy either DNA or RNA templates, and a ribonuclease H (RNase H) activity that cleaves the RNA strand of RNA-DNA heteroduplexes in a partially processive 3' to 5' endonucleasic mode. Conversion of viral genomic RNA into dsDNA requires many steps. A tRNA(3)-Lys binds to the primer-binding site (PBS) situated at the 5'-end of the viral RNA. RT uses the 3' end of the tRNA primer to perform a short round of RNA-dependent minus-strand DNA synthesis. The reading proceeds through the U5 region and ends after the repeated (R) region which is present at both ends of viral RNA. The portion of the RNA-DNA heteroduplex is digested by the RNase H, resulting in a ssDNA product attached to the tRNA primer. This ssDNA/tRNA hybridizes with the identical R region situated at the 3' end of viral RNA. This template exchange, known as minus-strand DNA strong stop transfer, can be either intra- or intermolecular. RT uses the 3' end of this newly synthesized short ssDNA to perform the RNA-dependent minus-strand DNA synthesis of the whole template. RNase H digests the RNA template except for two polypurine tracts (PPTs) situated at the 5'-end and near the center of the genome. It is not clear if both polymerase and RNase H activities are simultaneous. RNase H probably can proceed both in a polymerase-dependent (RNA cut into small fragments by the same RT performing DNA synthesis) and a polymerase-independent mode (cleavage of remaining RNA fragments by free RTs). Secondly, RT performs DNA-directed plus-strand DNA synthesis using the PPTs that have not been removed by RNase H as primers. PPTs and tRNA primers are then removed by RNase H. The 3' and 5' ssDNA PBS regions hybridize to form a circular dsDNA intermediate. Strand displacement synthesis by RT to the PBS and PPT ends produces a blunt ended, linear dsDNA copy of the viral genome that includes long terminal repeats (LTRs) at both ends. In terms of biological role, catalyzes viral DNA integration into the host chromosome, by performing a series of DNA cutting and joining reactions. This enzyme activity takes place after virion entry into a cell and reverse transcription of the RNA genome in dsDNA. The first step in the integration process is 3' processing. This step requires a complex comprising the viral genome, matrix protein, Vpr and integrase. This complex is called the pre-integration complex (PIC). The integrase protein removes 2 nucleotides from each 3' end of the viral DNA, leaving recessed CA OH's at the 3' ends. In the second step, the PIC enters cell nucleus. This process is mediated through integrase and Vpr proteins, and allows the virus to infect a non dividing cell. This ability to enter the nucleus is specific of lentiviruses, other retroviruses cannot and rely on cell division to access cell chromosomes. In the third step, termed strand transfer, the integrase protein joins the previously processed 3' ends to the 5' ends of strands of target cellular DNA at the site of integration. The 5'-ends are produced by integrase-catalyzed staggered cuts, 5 bp apart. A Y-shaped, gapped, recombination intermediate results, with the 5'-ends of the viral DNA strands and the 3' ends of target DNA strands remaining unjoined, flanking a gap of 5 bp. The last step is viral DNA integration into host chromosome. This involves host DNA repair synthesis in which the 5 bp gaps between the unjoined strands are filled in and then ligated. Since this process occurs at both cuts flanking the HIV genome, a 5 bp duplication of host DNA is produced at the ends of HIV-1 integration. Alternatively, Integrase may catalyze the excision of viral DNA just after strand transfer, this is termed disintegration. This is Gag-Pol polyprotein (gag-pol) from Human immunodeficiency virus type 2 subtype A (isolate SBLISY) (HIV-2).